Consider the following 90-residue polypeptide: DNA-binding protein HU-alpha (90 aa).

It belongs to the bacterial histone-like protein family. As to quaternary structure, heterodimer of an alpha and a beta chain.

Its function is as follows. Histone-like DNA-binding protein which is capable of wrapping DNA to stabilize it, and thus to prevent its denaturation under extreme environmental conditions. This is DNA-binding protein HU-alpha (hupA) from Salmonella typhi.